Reading from the N-terminus, the 123-residue chain is Large ribosomal subunit protein bL12 (123 aa).

It belongs to the bacterial ribosomal protein bL12 family. As to quaternary structure, homodimer. Part of the ribosomal stalk of the 50S ribosomal subunit. Forms a multimeric L10(L12)X complex, where L10 forms an elongated spine to which 2 to 4 L12 dimers bind in a sequential fashion. Binds GTP-bound translation factors.

In terms of biological role, forms part of the ribosomal stalk which helps the ribosome interact with GTP-bound translation factors. Is thus essential for accurate translation. This Neisseria meningitidis serogroup C (strain 053442) protein is Large ribosomal subunit protein bL12.